Reading from the N-terminus, the 66-residue chain is uncharacterized protein (66 aa).

The interval 1–21 is disordered; sequence MPGGDRTGPWGQGPRTGRRAG.

This is an uncharacterized protein from Archaeoglobus fulgidus (strain ATCC 49558 / DSM 4304 / JCM 9628 / NBRC 100126 / VC-16).